The chain runs to 135 residues: Hemoglobin subunit alpha (135 aa).

In terms of domain architecture, Globin spans 1 to 135 (AAVVALWGKI…VALALAERYK (135 aa)). An O2-binding site is contributed by His-52. A heme b-binding site is contributed by His-81.

Belongs to the globin family. Hb1 is a heterotetramer of two alpha chains and two beta-1 chains. Hb2 is a heterotetramer of two alpha chains and two beta-2 chains. In terms of processing, the N-terminus is blocked. In terms of tissue distribution, red blood cells.

Its function is as follows. Involved in oxygen transport from gills to the various peripheral tissues. This chain is Hemoglobin subunit alpha, found in Dissostichus eleginoides (Patagonian toothfish).